Reading from the N-terminus, the 101-residue chain is Small ribosomal subunit protein uS14 (101 aa).

This sequence belongs to the universal ribosomal protein uS14 family. In terms of assembly, part of the 30S ribosomal subunit. Contacts proteins S3 and S10.

Binds 16S rRNA, required for the assembly of 30S particles and may also be responsible for determining the conformation of the 16S rRNA at the A site. The polypeptide is Small ribosomal subunit protein uS14 (Brucella anthropi (strain ATCC 49188 / DSM 6882 / CCUG 24695 / JCM 21032 / LMG 3331 / NBRC 15819 / NCTC 12168 / Alc 37) (Ochrobactrum anthropi)).